Consider the following 93-residue polypeptide: Small ribosomal subunit protein bS20c (93 aa).

This sequence belongs to the bacterial ribosomal protein bS20 family.

It is found in the plastid. It localises to the chloroplast. Functionally, binds directly to 16S ribosomal RNA. The chain is Small ribosomal subunit protein bS20c from Thalassiosira pseudonana (Marine diatom).